A 1291-amino-acid polypeptide reads, in one-letter code: DNA-directed RNA polymerase subunit beta (1291 aa).

Belongs to the RNA polymerase beta chain family. In terms of assembly, the RNAP catalytic core consists of 2 alpha, 1 beta, 1 beta' and 1 omega subunit. When a sigma factor is associated with the core the holoenzyme is formed, which can initiate transcription.

The enzyme catalyses RNA(n) + a ribonucleoside 5'-triphosphate = RNA(n+1) + diphosphate. Its function is as follows. DNA-dependent RNA polymerase catalyzes the transcription of DNA into RNA using the four ribonucleoside triphosphates as substrates. The chain is DNA-directed RNA polymerase subunit beta from Mycoplasma mycoides subsp. mycoides SC (strain CCUG 32753 / NCTC 10114 / PG1).